The sequence spans 77 residues: ATP synthase subunit c (77 aa).

A run of 2 helical transmembrane segments spans residues 7-27 (AFKY…AALG) and 57-77 (VGLI…ILFL).

Belongs to the ATPase C chain family. F-type ATPases have 2 components, F(1) - the catalytic core - and F(0) - the membrane proton channel. F(1) has five subunits: alpha(3), beta(3), gamma(1), delta(1), epsilon(1). F(0) has three main subunits: a(1), b(2) and c(10-14). The alpha and beta chains form an alternating ring which encloses part of the gamma chain. F(1) is attached to F(0) by a central stalk formed by the gamma and epsilon chains, while a peripheral stalk is formed by the delta and b chains.

The protein localises to the cell membrane. F(1)F(0) ATP synthase produces ATP from ADP in the presence of a proton or sodium gradient. F-type ATPases consist of two structural domains, F(1) containing the extramembraneous catalytic core and F(0) containing the membrane proton channel, linked together by a central stalk and a peripheral stalk. During catalysis, ATP synthesis in the catalytic domain of F(1) is coupled via a rotary mechanism of the central stalk subunits to proton translocation. Its function is as follows. Key component of the F(0) channel; it plays a direct role in translocation across the membrane. A homomeric c-ring of between 10-14 subunits forms the central stalk rotor element with the F(1) delta and epsilon subunits. In Lactobacillus helveticus (strain DPC 4571), this protein is ATP synthase subunit c.